Consider the following 137-residue polypeptide: Large ribosomal subunit protein uL16 (137 aa).

It belongs to the universal ribosomal protein uL16 family. As to quaternary structure, part of the 50S ribosomal subunit.

Binds 23S rRNA and is also seen to make contacts with the A and possibly P site tRNAs. The chain is Large ribosomal subunit protein uL16 from Cellvibrio japonicus (strain Ueda107) (Pseudomonas fluorescens subsp. cellulosa).